The chain runs to 148 residues: MKVILRKNVASLGDAGEVVDVKNGYANNYLIPQGMAARATDGALKALETERKQQARKIEQQRVAARAIAEKIQQMTLKVPARAGESGKLFGTVTSVNIADALKVEGVDVDRRKITLDAPIRALGNYEAEVKLFMDVSATIKVTVEAEG.

It belongs to the bacterial ribosomal protein bL9 family.

Its function is as follows. Binds to the 23S rRNA. In Prosthecochloris aestuarii (strain DSM 271 / SK 413), this protein is Large ribosomal subunit protein bL9.